A 490-amino-acid polypeptide reads, in one-letter code: Protein U94 (490 aa).

The PV NS1-Nuc domain occupies 1-210; that stretch reads MFSIINPSDD…SHFNKKPNVK (210 aa). The 152-residue stretch at 312–463 folds into the SF3 helicase domain; the sequence is DPILAGTILY…IPRNFPVIQK (152 aa). An ATP-binding site is contributed by 338 to 345; sequence GPPGCGKS.

The protein localises to the host nucleus. The polypeptide is Protein U94 (U94) (Human herpesvirus 6B (HHV-6 variant B)).